The primary structure comprises 300 residues: Homoserine kinase (300 aa).

87-97 lines the ATP pocket; it reads PISRGLGSSSA.

This sequence belongs to the GHMP kinase family. Homoserine kinase subfamily.

The protein resides in the cytoplasm. It carries out the reaction L-homoserine + ATP = O-phospho-L-homoserine + ADP + H(+). It participates in amino-acid biosynthesis; L-threonine biosynthesis; L-threonine from L-aspartate: step 4/5. Its function is as follows. Catalyzes the ATP-dependent phosphorylation of L-homoserine to L-homoserine phosphate. This chain is Homoserine kinase, found in Clostridium kluyveri (strain ATCC 8527 / DSM 555 / NBRC 12016 / NCIMB 10680 / K1).